The primary structure comprises 300 residues: Bifunctional protein FolD 1 (300 aa).

Residues 166 to 168, Ser-191, and Ile-232 contribute to the NADP(+) site; that span reads GRS.

This sequence belongs to the tetrahydrofolate dehydrogenase/cyclohydrolase family. In terms of assembly, homodimer.

The catalysed reaction is (6R)-5,10-methylene-5,6,7,8-tetrahydrofolate + NADP(+) = (6R)-5,10-methenyltetrahydrofolate + NADPH. The enzyme catalyses (6R)-5,10-methenyltetrahydrofolate + H2O = (6R)-10-formyltetrahydrofolate + H(+). It participates in one-carbon metabolism; tetrahydrofolate interconversion. Its function is as follows. Catalyzes the oxidation of 5,10-methylenetetrahydrofolate to 5,10-methenyltetrahydrofolate and then the hydrolysis of 5,10-methenyltetrahydrofolate to 10-formyltetrahydrofolate. The polypeptide is Bifunctional protein FolD 1 (Roseobacter denitrificans (strain ATCC 33942 / OCh 114) (Erythrobacter sp. (strain OCh 114))).